The sequence spans 92 residues: MVRSVWKGPFVDGYLLGKAEKVRASGRNEVIKIWSRRSTILPQFVGLTFGVHNGNKHIPVFVSEEMVGHKFGEFAPTRTYYGHGADKKAKRK.

The protein belongs to the universal ribosomal protein uS19 family.

Functionally, protein S19 forms a complex with S13 that binds strongly to the 16S ribosomal RNA. In Bartonella bacilliformis (strain ATCC 35685 / KC583 / Herrer 020/F12,63), this protein is Small ribosomal subunit protein uS19.